The chain runs to 928 residues: DNA mismatch repair protein MutS (928 aa).

ATP is bound at residue 613-620 (GPNMAGKS). A compositionally biased stretch (basic and acidic residues) spans 854 to 872 (KAKSNKDDHRIDEKTENSS). A disordered region spans residues 854 to 880 (KAKSNKDDHRIDEKTENSSKKHKNKDS).

This sequence belongs to the DNA mismatch repair MutS family.

Functionally, this protein is involved in the repair of mismatches in DNA. It is possible that it carries out the mismatch recognition step. This protein has a weak ATPase activity. The chain is DNA mismatch repair protein MutS from Clostridium beijerinckii (strain ATCC 51743 / NCIMB 8052) (Clostridium acetobutylicum).